Reading from the N-terminus, the 40-residue chain is Natriuretic peptide TNPd (40 aa).

Cys-9 and Cys-25 are disulfide-bonded.

The protein belongs to the natriuretic peptide family. In terms of tissue distribution, expressed by the venom gland.

The protein resides in the secreted. Its function is as follows. Snake venom natriuretic peptide that exhibits vasoactive and hypotensive activity. Stimulates cGMP production through the natriuretic peptide receptor 1 (NPR1) with very high potencies for the rat NPR1 (EC(50)=18 nM), and very weak potencies over human NPR1 (30% activation at 10 uM). The sequence is that of Natriuretic peptide TNPd from Oxyuranus microlepidotus (Inland taipan).